A 645-amino-acid chain; its full sequence is Macrolide export ATP-binding/permease protein MacB (645 aa).

An ABC transporter domain is found at 6–244; it reads IELEGIRRSY…SSIAVVPWQA (239 aa). Position 42–49 (42–49) interacts with ATP; that stretch reads GASGSGKS. A run of 4 helical transmembrane segments spans residues 274–294, 526–546, 574–594, and 596–616; these read ALTL…MAIG, IAAI…LITV, AVVL…VIGV, and AALL…GALM.

It belongs to the ABC transporter superfamily. Macrolide exporter (TC 3.A.1.122) family. In terms of assembly, homodimer.

The protein resides in the cell inner membrane. Its function is as follows. Non-canonical ABC transporter that contains transmembrane domains (TMD), which form a pore in the inner membrane, and an ATP-binding domain (NBD), which is responsible for energy generation. Confers resistance against macrolides. The sequence is that of Macrolide export ATP-binding/permease protein MacB from Nitrobacter winogradskyi (strain ATCC 25391 / DSM 10237 / CIP 104748 / NCIMB 11846 / Nb-255).